We begin with the raw amino-acid sequence, 505 residues long: L-arabinose isomerase (505 aa).

Residues Glu-308, Glu-335, His-352, and His-453 each coordinate Mn(2+).

The protein belongs to the arabinose isomerase family. Mn(2+) serves as cofactor.

It catalyses the reaction beta-L-arabinopyranose = L-ribulose. It participates in carbohydrate degradation; L-arabinose degradation via L-ribulose; D-xylulose 5-phosphate from L-arabinose (bacterial route): step 1/3. Functionally, catalyzes the conversion of L-arabinose to L-ribulose. This chain is L-arabinose isomerase, found in Bifidobacterium animalis subsp. lactis (strain AD011).